The following is a 486-amino-acid chain: UDP-N-acetylmuramoyl-L-alanyl-D-glutamate--2,6-diaminopimelate ligase (486 aa).

Residue Ser-30 coordinates UDP-N-acetyl-alpha-D-muramoyl-L-alanyl-D-glutamate. Residue 112–118 (GTNGKTT) coordinates ATP. Residues 154–155 (TT), Ser-181, Gln-187, and Arg-189 contribute to the UDP-N-acetyl-alpha-D-muramoyl-L-alanyl-D-glutamate site. The residue at position 221 (Lys-221) is an N6-carboxylysine. Residues Arg-378, 402–405 (DNPR), Gly-455, and Glu-459 each bind meso-2,6-diaminopimelate. Positions 402 to 405 (DNPR) match the Meso-diaminopimelate recognition motif motif.

Belongs to the MurCDEF family. MurE subfamily. Mg(2+) is required as a cofactor. In terms of processing, carboxylation is probably crucial for Mg(2+) binding and, consequently, for the gamma-phosphate positioning of ATP.

It localises to the cytoplasm. It carries out the reaction UDP-N-acetyl-alpha-D-muramoyl-L-alanyl-D-glutamate + meso-2,6-diaminopimelate + ATP = UDP-N-acetyl-alpha-D-muramoyl-L-alanyl-gamma-D-glutamyl-meso-2,6-diaminopimelate + ADP + phosphate + H(+). It functions in the pathway cell wall biogenesis; peptidoglycan biosynthesis. Catalyzes the addition of meso-diaminopimelic acid to the nucleotide precursor UDP-N-acetylmuramoyl-L-alanyl-D-glutamate (UMAG) in the biosynthesis of bacterial cell-wall peptidoglycan. In Cytophaga hutchinsonii (strain ATCC 33406 / DSM 1761 / CIP 103989 / NBRC 15051 / NCIMB 9469 / D465), this protein is UDP-N-acetylmuramoyl-L-alanyl-D-glutamate--2,6-diaminopimelate ligase.